A 249-amino-acid chain; its full sequence is Transmembrane protein 150C (249 aa).

The Cytoplasmic segment spans residues 1-9 (MDGKKCSVW). The chain crosses the membrane as a helical span at residues 10–30 (MFLPLVFTLFTSAGLWIVYFI). At 31-64 (AVEDDKILPLNSAERKPGVKHAPYISIAGDDPPA) the chain is on the extracellular side. The chain crosses the membrane as a helical span at residues 65–85 (SCVFSQVMNMAAFLALVVAVL). Residues 86-97 (RFIQLKPKVLNP) lie on the Cytoplasmic side of the membrane. The chain crosses the membrane as a helical span at residues 98–118 (WLNISGLVALCLASFGMTLLG). Topologically, residues 119 to 130 (NFQLTNDEEIHN) are extracellular. The helical transmembrane segment at 131–151 (VGTSLTFGFGTLTCWIQAALT) threads the bilayer. Over 152-168 (LKVNIKNEGRRVGIPRV) the chain is Cytoplasmic. A helical membrane pass occupies residues 169-189 (ILSASITLCVVLYFILMAQSI). Residues 190-192 (HMY) are Extracellular-facing. Residues 193–213 (AARVQWGLVMCFLSYFGTFAV) traverse the membrane as a helical segment. At 214–249 (EFRHYRYEIVCSEYQENFLSFSESLSEASEYQTDQV) the chain is on the cytoplasmic side.

The protein belongs to the DRAM/TMEM150 family.

Its subcellular location is the cell membrane. The protein localises to the lysosome membrane. It carries out the reaction Ca(2+)(in) = Ca(2+)(out). The enzyme catalyses Na(+)(in) = Na(+)(out). The catalysed reaction is K(+)(in) = K(+)(out). It catalyses the reaction Mg(2+)(in) = Mg(2+)(out). Nonselective cationic channel with high permeability to Ca(2+). Component of a mechanosensitive cation channel, confers mechanically activated (MA) currents with slow inactivation kinetics. May contribute to proprioception. In Homo sapiens (Human), this protein is Transmembrane protein 150C.